We begin with the raw amino-acid sequence, 305 residues long: UDP-3-O-acyl-N-acetylglucosamine deacetylase (305 aa).

Residues His79, His238, and Asp242 each contribute to the Zn(2+) site. His265 serves as the catalytic Proton donor.

The protein belongs to the LpxC family. It depends on Zn(2+) as a cofactor.

The enzyme catalyses a UDP-3-O-[(3R)-3-hydroxyacyl]-N-acetyl-alpha-D-glucosamine + H2O = a UDP-3-O-[(3R)-3-hydroxyacyl]-alpha-D-glucosamine + acetate. The protein operates within glycolipid biosynthesis; lipid IV(A) biosynthesis; lipid IV(A) from (3R)-3-hydroxytetradecanoyl-[acyl-carrier-protein] and UDP-N-acetyl-alpha-D-glucosamine: step 2/6. Functionally, catalyzes the hydrolysis of UDP-3-O-myristoyl-N-acetylglucosamine to form UDP-3-O-myristoylglucosamine and acetate, the committed step in lipid A biosynthesis. The chain is UDP-3-O-acyl-N-acetylglucosamine deacetylase from Proteus mirabilis (strain HI4320).